Here is a 146-residue protein sequence, read N- to C-terminus: Snaclec jerdonibitin subunit beta (146 aa).

Residues 1 to 23 (MGRFIFVSFGLLVVFLSLSGTGA) form the signal peptide. Cystine bridges form between Cys-25–Cys-36, Cys-53–Cys-142, and Cys-119–Cys-134. One can recognise a C-type lectin domain in the interval 32–143 (YEGHCYRVFQ…CSKTYPFVCK (112 aa)).

It belongs to the snaclec family. In terms of assembly, heterodimer of subunits alpha and beta; disulfide-linked. Expressed by the venom gland.

It localises to the secreted. Its function is as follows. Snaclec that dose-dependently inhibits platelet aggregation induced by ristocetin or low-dose thrombin, but not by high-dose thrombin. Binds to GPIbalpha (GP1BA). In vivo, also dose-dependently induces thrombocytopenia of mice and platelet counts remains at very low level even after 18 hours intravenous injection. The protein is Snaclec jerdonibitin subunit beta of Protobothrops jerdonii (Jerdon's pitviper).